Reading from the N-terminus, the 149-residue chain is MEKKEKSMNKSFKNLVIGAVSGVAAAYFLSTEKGKALKNRAEKAYQAYKESPDDYHQFAKEKGSEYSHLARDTFYDVKDKLASGDLTKEDMLDLLKDKTTAFVQKTKETFAEVEAKEKQDDVIIDLNEDDIIIDYTEQDEPVSDTLDKH.

A helical membrane pass occupies residues 12 to 31; the sequence is FKNLVIGAVSGVAAAYFLST.

It is found in the membrane. This is an uncharacterized protein from Streptococcus pyogenes serotype M6 (strain ATCC BAA-946 / MGAS10394).